A 1427-amino-acid chain; its full sequence is DNA-directed RNA polymerase subunit beta' (1427 aa).

The Zn(2+) site is built by Cys-66, Cys-68, Cys-81, and Cys-84. Positions 472, 474, and 476 each coordinate Mg(2+). Cys-815, Cys-889, Cys-896, and Cys-899 together coordinate Zn(2+).

This sequence belongs to the RNA polymerase beta' chain family. In terms of assembly, the RNAP catalytic core consists of 2 alpha, 1 beta, 1 beta' and 1 omega subunit. When a sigma factor is associated with the core the holoenzyme is formed, which can initiate transcription. Mg(2+) serves as cofactor. The cofactor is Zn(2+).

The enzyme catalyses RNA(n) + a ribonucleoside 5'-triphosphate = RNA(n+1) + diphosphate. Functionally, DNA-dependent RNA polymerase catalyzes the transcription of DNA into RNA using the four ribonucleoside triphosphates as substrates. The protein is DNA-directed RNA polymerase subunit beta' of Bacteroides thetaiotaomicron (strain ATCC 29148 / DSM 2079 / JCM 5827 / CCUG 10774 / NCTC 10582 / VPI-5482 / E50).